We begin with the raw amino-acid sequence, 243 residues long: Probable transcriptional regulatory protein LJ_0904 (243 aa).

A disordered region spans residues 1–22 (MSGHSKWHNIQGRKNAQDAKRG).

It belongs to the TACO1 family.

It is found in the cytoplasm. The protein is Probable transcriptional regulatory protein LJ_0904 of Lactobacillus johnsonii (strain CNCM I-12250 / La1 / NCC 533).